Reading from the N-terminus, the 361-residue chain is L-threonine 3-dehydrogenase (361 aa).

C38 contributes to the Zn(2+) binding site. Catalysis depends on charge relay system residues T40 and H43. 6 residues coordinate Zn(2+): H63, E64, C93, C96, C99, and C107. NAD(+)-binding positions include I175, D195, R200, L262–I264, and I286–Y287.

Belongs to the zinc-containing alcohol dehydrogenase family. In terms of assembly, homotetramer. Requires Zn(2+) as cofactor.

The protein localises to the cytoplasm. The enzyme catalyses L-threonine + NAD(+) = (2S)-2-amino-3-oxobutanoate + NADH + H(+). Its pathway is amino-acid degradation; L-threonine degradation via oxydo-reductase pathway; glycine from L-threonine: step 1/2. In terms of biological role, catalyzes the NAD(+)-dependent oxidation of L-threonine to 2-amino-3-ketobutyrate. This Pectobacterium atrosepticum (strain SCRI 1043 / ATCC BAA-672) (Erwinia carotovora subsp. atroseptica) protein is L-threonine 3-dehydrogenase.